The chain runs to 197 residues: Thymidine kinase (197 aa).

ATP is bound by residues 9-16 (AAMNAGKS) and 83-86 (DESQ). Residue Glu84 is the Proton acceptor of the active site. Cys141, Cys143, Cys178, and Cys181 together coordinate Zn(2+).

This sequence belongs to the thymidine kinase family. In terms of assembly, homotetramer.

Its subcellular location is the cytoplasm. It carries out the reaction thymidine + ATP = dTMP + ADP + H(+). This is Thymidine kinase from Albidiferax ferrireducens (strain ATCC BAA-621 / DSM 15236 / T118) (Rhodoferax ferrireducens).